A 295-amino-acid chain; its full sequence is Proline iminopeptidase (295 aa).

The AB hydrolase-1 domain maps to 29–279 (PLLLLHGGPG…GCGHMPFVQE (251 aa)). Catalysis depends on Ser107, which acts as the Nucleophile. Residue Asp246 is part of the active site. The active-site Proton donor is the His273.

This sequence belongs to the peptidase S33 family.

It localises to the cell envelope. The catalysed reaction is Release of N-terminal proline from a peptide.. Releases the N-terminal proline from various substrates. The sequence is that of Proline iminopeptidase from Lactobacillus delbrueckii subsp. bulgaricus (strain ATCC 11842 / DSM 20081 / BCRC 10696 / JCM 1002 / NBRC 13953 / NCIMB 11778 / NCTC 12712 / WDCM 00102 / Lb 14).